The chain runs to 398 residues: Chalcone synthase 1 (398 aa).

58–65 (KFKRMCDK) contributes to the CoA binding site. C167 acts as the Acyl-thioester intermediate in catalysis. Substrate is bound by residues T200 and 219-220 (GD). A311 is a CoA binding site.

Belongs to the thiolase-like superfamily. Chalcone/stilbene synthases family. In terms of assembly, homodimer.

It catalyses the reaction (E)-4-coumaroyl-CoA + 3 malonyl-CoA + 3 H(+) = 2',4,4',6'-tetrahydroxychalcone + 3 CO2 + 4 CoA. The protein operates within secondary metabolite biosynthesis; flavonoid biosynthesis. The primary product of this enzyme is 4,2',4',6'-tetrahydroxychalcone (also termed naringenin-chalcone or chalcone) which can under specific conditions spontaneously isomerize into naringenin. The sequence is that of Chalcone synthase 1 (CHS1) from Oryza sativa subsp. indica (Rice).